The chain runs to 152 residues: Superoxide dismutase [Cu-Zn] 5 (152 aa).

Residues His-44, His-46, and His-61 each coordinate Cu cation. A disulfide bond links Cys-55 and Cys-144. The Zn(2+) site is built by His-61, His-69, His-78, and Asp-81. Residue His-118 participates in Cu cation binding.

It belongs to the Cu-Zn superoxide dismutase family. Cu cation serves as cofactor. The cofactor is Zn(2+).

The catalysed reaction is 2 superoxide + 2 H(+) = H2O2 + O2. Functionally, destroys radicals which are normally produced within the cells and which are toxic to biological systems. In Dictyostelium discoideum (Social amoeba), this protein is Superoxide dismutase [Cu-Zn] 5 (sodE).